We begin with the raw amino-acid sequence, 681 residues long: MMENGIWKDALIQSMKKLSPKLQVKNPVMLLVYVGAILATSLYFLGFFGISDEKAGYTLAIALILWFTVLFANFAEAIAEGRGRAQADSLKMARKDVLARKLKNLEDKSDVIEVASNDLKKGDIVYVLANEQIPMDGEVIEGAASVDESAITGESAPVIRESGGDRSAVTGGTTLVSDWLVIRVTAVSGESFLDKMIAMVEGASRKKTPNEIALQILLVTLSIIFLAVSATLLPFTEFASKQAGAGSAISITNVIALLVCLAPTTIGALLSSIGIAGMSRLNQANVLAMSGRAIEAAGDVDVLLLDKTGTITLGNRKASEFLPVDGVTEQELADAAQLSSIADETAEGRSIVVLAKERFDIRGRDFAEMHAEFVPFTATTRMSGIDYQGNTIRKGAADAVRAYVSANGGTYPKECDTIVSKVAGAGGTPLVVVRNNKVLGVIYLKDIVKNGVKERFLDLRKMGIKTIMITGDNPMTAAAIAAEAGVDDFLAEATPEAKLELIREYQREGHLVAMTGDGTNDAPALAQADVAVAMNTGTQAAKEAGNMVDLDSSPTKLIDIVRIGKQLLMTRGALTTFSVANDLAKYFAIIPVLFYGIFPQLEALNLMDLTSPTSAILSAIIYNAVIIIFLIPLSLKGVKYREMPAGKLLSRNMLIYGLGGLIAPFIAIKLIDMLLTVLGIV.

The next 4 membrane-spanning stretches (helical) occupy residues 30–50 (LLVYVGAILATSLYFLGFFGI), 59–79 (LAIALILWFTVLFANFAEAIA), 216–236 (ILLVTLSIIFLAVSATLLPFT), and 255–275 (IALLVCLAPTTIGALLSSIGI). Residue Asp306 is the 4-aspartylphosphate intermediate of the active site. ATP contacts are provided by residues Asp343, Glu347, 376–383 (FTATTRMS), and Lys394. Mg(2+) contacts are provided by Asp517 and Asp521. The next 3 membrane-spanning stretches (helical) occupy residues 587 to 607 (FAIIPVLFYGIFPQLEALNLM), 615 to 635 (AILSAIIYNAVIIIFLIPLSL), and 661 to 681 (LIAPFIAIKLIDMLLTVLGIV).

Belongs to the cation transport ATPase (P-type) (TC 3.A.3) family. Type IA subfamily. The system is composed of three essential subunits: KdpA, KdpB and KdpC.

The protein localises to the cell membrane. The enzyme catalyses K(+)(out) + ATP + H2O = K(+)(in) + ADP + phosphate + H(+). Its function is as follows. Part of the high-affinity ATP-driven potassium transport (or Kdp) system, which catalyzes the hydrolysis of ATP coupled with the electrogenic transport of potassium into the cytoplasm. This subunit is responsible for energy coupling to the transport system and for the release of the potassium ions to the cytoplasm. This Listeria innocua serovar 6a (strain ATCC BAA-680 / CLIP 11262) protein is Potassium-transporting ATPase ATP-binding subunit 1.